Reading from the N-terminus, the 1544-residue chain is MSGTQSTITDRFPLKKPIRHGSILNRESPTDKKQKVERIASHDFDPTDSSSKKTKSSSEESRSEIYGLVQRCVIIQKDDNGFGLTVSGDNPVFVQSVKEDGAAMRAGVQTGDRIIKVNGTLVTHSNHLEVVKLIKSGSYVALTVQGRPPGSPQIPLADSEVEPSVIGHMSPIMTSPHSPGASGNMERITSPVLMGEENNVVHNQKVEILRKMLQKEQERLQLLQEDYNRTPAQRLLKEIQEAKKHIPQLQEQLSKATGSAQDGAVVTPSRPLGDTLTVSEAETDPGDVLGRTDCSSGDASRPSSDNADSPKSGPKERIYLEENPEKSETIQDTDTQSLVGSPSTRIAPHIIGAEDDDFGTEHEQINGQCSCFQSIELLKSRPAHLAVFLHHVVSQFDPATLLCYLYSDLYKHTNSKETRRIFLEFHQFFLDRSAHLKVSVPDEMSADLEKRRPELIPEDLHRHYIQTMQERVHPEVQRHLEDFRQKRSMGLTLAESELTKLDAERDKDRLTLEKERTCAEQIVAKIEEVLMTAQAVEEDKSSTMQYVILMYMKHLGVKVKEPRNLEHKRGRIGFLPKIKQSMKKDKEGEEKGKRRGFPSILGPPRRPSRHDNSAIGRAMELQKARHPKHLSTPSSVSPEPQDSAKLRQSGLANEGTDAGYLPANSMSSVASGASFSQEGGKENDTGSKQVGETSAPGDTLDGTPRTLNTVFDFPPPPLDQVQEEECEVERVTEHGTPKPFRKFDSVAFGESQSEDEQFENDLETDPPNWQQLVSREVLLGLKPCEIKRQEVINELFYTERAHVRTLKVLDQVFYQRVSREGILSPSELRKIFSNLEDILQLHIGLNEQMKAVRKRNETSVIDQIGEDLLTWFSGPGEEKLKHAAATFCSNQPFALEMIKSRQKKDSRFQTFVQDAESNPLCRRLQLKDIIPTQMQRLTKYPLLLDNIAKYTEWPTEREKVKKAADHCRQILNYVNQAVKEAENKQRLEDYQRRLDTSSLKLSEYPNVEELRNLDLTKRKMIHEGPLVWKVNRDKTIDLYTLLLEDILVLLQKQDDRLVLRCHSKILASTADSKHTFSPVIKLSTVLVRQVATDNKALFVISMSDNGAQIYELVAQTVSEKTVWQDLICRMAASVKEQSTKPIPLPQSTPGEGDNDEEDPSKLKEEQHGISVTGLQSPDRDLGLESTLISSKPQSHSLSTSGKSEVRDLFVAERQFAKEQHTDGTLKEVGEDYQIAIPDSHLPVSEERWALDALRNLGLLKQLLVQQLGLTEKSVQEDWQHFPRYRTASQGPQTDSVIQNSENIKAYHSGEGHMPFRTGTGDIATCYSPRTSTESFAPRDSVGLAPQDSQASNILVMDHMIMTPEMPTMEPEGGLDDSGEHFFDAREAHSDENPSEGDGAVNKEEKDVNLRISGNYLILDGYDPVQESSTDEEVASSLTLQPMTGIPAVESTHQQQHSPQNTHSDGAISPFTPEFLVQQRWGAMEYSCFEIQSPSSCADSQSQIMEYIHKIEADLEHLKKVEESYTILCQRLAGSALTDKHSDKS.

The interval 1–62 (MSGTQSTITD…KTKSSSEESR (62 aa)) is disordered. At serine 2 the chain carries N-acetylserine. The span at 28–45 (SPTDKKQKVERIASHDFD) shows a compositional bias: basic and acidic residues. Serine 41 carries the post-translational modification Phosphoserine. One can recognise a PDZ domain in the interval 72–151 (CVIIQKDDNG…LTVQGRPPGS (80 aa)). Residues 194–262 (MGEENNVVHN…LSKATGSAQD (69 aa)) adopt a coiled-coil conformation. A disordered region spans residues 247 to 346 (PQLQEQLSKA…SLVGSPSTRI (100 aa)). Composition is skewed to polar residues over residues 249-260 (LQEQLSKATGSA) and 293-309 (DCSSGDASRPSSDNADS). Residue serine 309 is modified to Phosphoserine. Positions 313–329 (GPKERIYLEENPEKSET) are enriched in basic and acidic residues. The segment covering 330-344 (IQDTDTQSLVGSPST) has biased composition (polar residues). Position 341 is a phosphoserine (serine 341). An RGSL domain is found at 367–558 (GQCSCFQSIE…LMYMKHLGVK (192 aa)). The interval 570–706 (GRIGFLPKIK…GDTLDGTPRT (137 aa)) is disordered. The span at 582–592 (MKKDKEGEEKG) shows a compositional bias: basic and acidic residues. Residues 631-640 (STPSSVSPEP) show a composition bias toward polar residues. Serine 637 is modified (phosphoserine). Low complexity predominate over residues 663–676 (ANSMSSVASGASFS). Threonine 736 bears the Phosphothreonine mark. One can recognise a DH domain in the interval 787-977 (KRQEVINELF…RQILNYVNQA (191 aa)). The 114-residue stretch at 1019–1132 (KMIHEGPLVW…WQDLICRMAA (114 aa)) folds into the PH domain. Over residues 1138–1149 (STKPIPLPQSTP) the composition is skewed to polar residues. The tract at residues 1138 to 1179 (STKPIPLPQSTPGEGDNDEEDPSKLKEEQHGISVTGLQSPDR) is disordered. A phosphoserine mark is found at serine 1288, serine 1327, serine 1377, serine 1457, and serine 1541.

As to quaternary structure, interacts with GNA12 and GNA13, probably through the RGS-like domain. Interacts with RHOA, PLXNB1 and PLXNB2. Interacts through its PDZ domain with IGF1R beta subunit. Interacts with GCSAM. Found in a complex with ARHGEF11 and ARHGEF12; binding to ARHGEF11 and ARHGEF12 enhances CDC42 GEF activity of PLEKHG4B, and PLEKHG4B, in turn, inhibits ARHGEF11- and ARHGEF12-mediated RHOA activation. Ubiquitously expressed. Isoform 2 is found in jejunum and testis.

It localises to the cytoplasm. The protein localises to the membrane. Its function is as follows. May play a role in the regulation of RhoA GTPase by guanine nucleotide-binding alpha-12 (GNA12) and alpha-13 (GNA13). Acts as guanine nucleotide exchange factor (GEF) for RhoA GTPase and may act as GTPase-activating protein (GAP) for GNA12 and GNA13. In Homo sapiens (Human), this protein is Rho guanine nucleotide exchange factor 12 (ARHGEF12).